A 205-amino-acid polypeptide reads, in one-letter code: MGNKWSKGWPAVRERIRQTPPAPPAAEGVGAASQDLAKHGAISSSNTATNNPDCAWLEAQEESEEVGFPVRPQVPLRPMTFKGAFDLSFFLKEKGGLDGLIYSKKRQEILDLWVYHTQGFFPDWHNYTPGPGTRYPLCFGWCFKLVPVDPREVEEANTGENNCLLHPMSQHGMDDDEREVLMWKFDSSLARKHLAREMHPEFYKD.

Gly-2 carries the N-myristoyl glycine; by host lipid modification. Ser-6 bears the Phosphoserine; by host mark. Residues 61–65 form an acidic; interacts with host PACS1 and PACS2; stabilizes the interaction of NEF/MHC-I with host AP1M1; necessary for MHC-I internalization region; that stretch reads EESEE. The SH3-binding; interaction with Src family tyrosine kinases stretch occupies residues 69–78; the sequence is PVRPQVPLRP. The short motif at 72–75 is the PxxP; stabilizes the interaction of NEF/MHC-I with host AP1M1; necessary for MHC-I internalization element; that stretch reads PQVP. The tract at residues 108–124 is mediates dimerization, Nef-PTE1 interaction; it reads EILDLWVYHTQGFFPDW. Residues 148-180 are binding to ATP6V1H; the sequence is VDPREVEEANTGENNCLLHPMSQHGMDDDEREV. A Dileucine internalization motif; necessary for CD4 internalization motif is present at residues 164-165; that stretch reads LL. Residues 174–175 carry the Diacidic; necessary for CD4 internalization motif; the sequence is DD.

Belongs to the lentivirus primate group Nef protein family. As to quaternary structure, monomer; cytosolic form. Homodimer; membrane bound form. Interacts with Nef associated p21-activated kinase (PAK2); this interaction activates PAK2. Associates with the Nef-MHC-I-AP1 complex; this complex is required for MHC-I internalization. Interacts (via C-terminus) with host PI3-kinase. Interacts with host PACS1; this interaction seems to be weak. Interacts with host PACS2. Interacts with host LCK and MAPK3; these interactions inhibit the kinase activity of the latter. Interacts with host ATP6V1H; this interaction may play a role in CD4 endocytosis. Associates with the CD4-Nef-AP2 complex; this complex is required for CD4 internalization. Interacts with host AP2 subunit alpha and AP2 subunit sigma2. Interacts with TCR-zeta chain; this interaction up-regulates the Fas ligand (FasL) surface expression. Interacts with host HCK, LYN, and SRC; these interactions activate the Src family kinases. Interacts with MAP3K5; this interaction inhibits the Fas and TNFR-mediated death signals. Interacts with beta-COP and PTE1. Interacts with human RACK1; this increases Nef phosphorylation by PKC. Interacts with TP53; this interaction decreases the half-life of TP53, protecting the infected cell against p53-mediated apoptosis. The virion-associated Nef proteins are cleaved by the viral protease to release the soluble C-terminal core protein. Nef is probably cleaved concomitantly with viral structural proteins on maturation of virus particles. In terms of processing, myristoylated. Post-translationally, phosphorylated on serine residues, probably by host PKCdelta and theta.

It is found in the host cell membrane. The protein resides in the virion. It localises to the secreted. Its subcellular location is the host Golgi apparatus membrane. Functionally, factor of infectivity and pathogenicity, required for optimal virus replication. Alters numerous pathways of T-lymphocyte function and down-regulates immunity surface molecules in order to evade host defense and increase viral infectivity. Alters the functionality of other immunity cells, like dendritic cells, monocytes/macrophages and NK cells. Its function is as follows. In infected CD4(+) T-lymphocytes, down-regulates the surface MHC-I, mature MHC-II, CD4, CD28, CCR5 and CXCR4 molecules. Mediates internalization and degradation of host CD4 through the interaction of with the cytoplasmic tail of CD4, the recruitment of AP-2 (clathrin adapter protein complex 2), internalization through clathrin coated pits, and subsequent transport to endosomes and lysosomes for degradation. Diverts host MHC-I molecules to the trans-Golgi network-associated endosomal compartments by an endocytic pathway to finally target them for degradation. MHC-I down-regulation may involve AP-1 (clathrin adapter protein complex 1) or possibly Src family kinase-ZAP70/Syk-PI3K cascade recruited by PACS2. In consequence infected cells are masked for immune recognition by cytotoxic T-lymphocytes. Decreasing the number of immune receptors also prevents reinfection by more HIV particles (superinfection). Down-regulates host SERINC3 and SERINC5 thereby excluding these proteins from the viral particles. Virion infectivity is drastically higher when SERINC3 or SERINC5 are excluded from the viral envelope, because these host antiviral proteins impair the membrane fusion event necessary for subsequent virion penetration. In terms of biological role, bypasses host T-cell signaling by inducing a transcriptional program nearly identical to that of anti-CD3 cell activation. Interaction with TCR-zeta chain up-regulates the Fas ligand (FasL). Increasing surface FasL molecules and decreasing surface MHC-I molecules on infected CD4(+) cells send attacking cytotoxic CD8+ T-lymphocytes into apoptosis. Plays a role in optimizing the host cell environment for viral replication without causing cell death by apoptosis. Protects the infected cells from apoptosis in order to keep them alive until the next virus generation is ready to strike. Inhibits the Fas and TNFR-mediated death signals by blocking MAP3K5/ASK1. Decreases the half-life of TP53, protecting the infected cell against p53-mediated apoptosis. Inhibits the apoptotic signals regulated by the Bcl-2 family proteins through the formation of a Nef/PI3-kinase/PAK2 complex that leads to activation of PAK2 and induces phosphorylation of host BAD. Functionally, extracellular Nef protein targets CD4(+) T-lymphocytes for apoptosis by interacting with CXCR4 surface receptors. This is Protein Nef from Human immunodeficiency virus type 1 group M subtype A (isolate Z321) (HIV-1).